The primary structure comprises 673 residues: Protein kinase ORF74 (673 aa).

Positions 128–404 (TDTDEAVARG…ARELLVYPRY (277 aa)) constitute a Protein kinase domain. D252 serves as the catalytic Proton acceptor. The interval 340-364 (MDNDALDSRRTGRDGDPVNPEGFGT) is disordered. The segment covering 345–355 (LDSRRTGRDGD) has biased composition (basic and acidic residues).

Belongs to the protein kinase superfamily. Ser/Thr protein kinase family.

The catalysed reaction is L-seryl-[protein] + ATP = O-phospho-L-seryl-[protein] + ADP + H(+). It catalyses the reaction L-threonyl-[protein] + ATP = O-phospho-L-threonyl-[protein] + ADP + H(+). The chain is Protein kinase ORF74 (ORF74) from Ictalurid herpesvirus 1 (strain Auburn) (IcHV-1).